Reading from the N-terminus, the 158-residue chain is Large ribosomal subunit protein uL16 (158 aa).

It belongs to the universal ribosomal protein uL16 family. As to quaternary structure, part of the 50S ribosomal subunit.

In terms of biological role, binds 23S rRNA and is also seen to make contacts with the A and possibly P site tRNAs. In Synechococcus sp. (strain CC9605), this protein is Large ribosomal subunit protein uL16.